We begin with the raw amino-acid sequence, 449 residues long: Doublesex- and mab-3-related transcription factor A2 (449 aa).

Residues 57–104 constitute a DNA-binding region (DM); that stretch reads CARCRNHGVVSALKGHKRYCRWKDCMCAKCTLIAERQRVMAAQVALRR. Positions 166-259 are disordered; the sequence is KNQLSGSATP…PSPSSAASRH (94 aa). Residues 167–177 show a composition bias toward polar residues; that stretch reads NQLSGSATPQP. Residues 230-240 are compositionally biased toward low complexity; sequence GSVSSIGSDSG. A DMA domain is found at 260 to 295; it reads MNAIDILTRVFPSHKRSVLELVLQGCGKDVVQAIEQ.

It belongs to the DMRT family.

It is found in the nucleus. Functionally, may be involved in sexual development. This is Doublesex- and mab-3-related transcription factor A2 (dmrta2) from Oreochromis niloticus (Nile tilapia).